We begin with the raw amino-acid sequence, 297 residues long: Cell division protein FtsQ (297 aa).

The Cytoplasmic portion of the chain corresponds to 1–33 (MRPLSFRRRTAQARPDPAPSRLSYRVQRLLLTP). Residues 34-54 (LFHALIRVGLPAFVLAFGVGW) form a helical membrane-spanning segment. Residues 55–297 (LLQNQELRDE…IRGLTNDRIE (243 aa)) lie on the Periplasmic side of the membrane. The POTRA domain occupies 82 to 150 (FMVNAMSVSG…GILAIEIVER (69 aa)).

It belongs to the FtsQ/DivIB family. FtsQ subfamily.

It is found in the cell inner membrane. Functionally, essential cell division protein. The polypeptide is Cell division protein FtsQ (Dinoroseobacter shibae (strain DSM 16493 / NCIMB 14021 / DFL 12)).